The sequence spans 315 residues: tRNA dimethylallyltransferase (315 aa).

11–18 is an ATP binding site; sequence GPTASGKS. A substrate-binding site is contributed by 13–18; sequence TASGKS. 2 interaction with substrate tRNA regions span residues 36–39 and 160–164; these read DSMQ and QRLIR.

The protein belongs to the IPP transferase family. Monomer. Requires Mg(2+) as cofactor.

The enzyme catalyses adenosine(37) in tRNA + dimethylallyl diphosphate = N(6)-dimethylallyladenosine(37) in tRNA + diphosphate. Its function is as follows. Catalyzes the transfer of a dimethylallyl group onto the adenine at position 37 in tRNAs that read codons beginning with uridine, leading to the formation of N6-(dimethylallyl)adenosine (i(6)A). This chain is tRNA dimethylallyltransferase, found in Rickettsia bellii (strain RML369-C).